We begin with the raw amino-acid sequence, 410 residues long: Gamma-glutamyl phosphate reductase (410 aa).

This sequence belongs to the gamma-glutamyl phosphate reductase family.

It localises to the cytoplasm. It carries out the reaction L-glutamate 5-semialdehyde + phosphate + NADP(+) = L-glutamyl 5-phosphate + NADPH + H(+). Its pathway is amino-acid biosynthesis; L-proline biosynthesis; L-glutamate 5-semialdehyde from L-glutamate: step 2/2. Its function is as follows. Catalyzes the NADPH-dependent reduction of L-glutamate 5-phosphate into L-glutamate 5-semialdehyde and phosphate. The product spontaneously undergoes cyclization to form 1-pyrroline-5-carboxylate. In Sulfurovum sp. (strain NBC37-1), this protein is Gamma-glutamyl phosphate reductase.